Consider the following 475-residue polypeptide: Probable proline--tRNA ligase, mitochondrial (475 aa).

The N-terminal 29 residues, 1 to 29 (MEGLLTRCRTLSALATCSLRHSRCIVRKC), are a transit peptide targeting the mitochondrion.

The protein belongs to the class-II aminoacyl-tRNA synthetase family.

It is found in the mitochondrion matrix. It carries out the reaction tRNA(Pro) + L-proline + ATP = L-prolyl-tRNA(Pro) + AMP + diphosphate. Functionally, mitochondrial aminoacyl-tRNA synthetase that catalyzes the specific attachment of the proline amino acid (aa) to the homologous transfer RNA (tRNA), further participating in protein synthesis. The reaction occurs in a two steps: proline is first activated by ATP to form Pro-AMP and then transferred to the acceptor end of tRNA(Pro). This is Probable proline--tRNA ligase, mitochondrial (Pars2) from Rattus norvegicus (Rat).